The chain runs to 387 residues: 1-deoxy-D-xylulose 5-phosphate reductoisomerase (387 aa).

NADPH contacts are provided by Thr-10, Gly-11, Ser-12, Ile-13, Gly-36, Asn-38, and Asn-122. Lys-123 serves as a coordination point for 1-deoxy-D-xylulose 5-phosphate. Glu-124 is an NADPH binding site. Asp-148 contacts Mn(2+). 1-deoxy-D-xylulose 5-phosphate is bound by residues Ser-149, Glu-150, Ser-174, and His-197. Residue Glu-150 coordinates Mn(2+). Gly-203 is an NADPH binding site. Residues Ser-210, Asn-215, Lys-216, and Glu-219 each contribute to the 1-deoxy-D-xylulose 5-phosphate site. Residue Glu-219 participates in Mn(2+) binding.

It belongs to the DXR family. It depends on Mg(2+) as a cofactor. Mn(2+) is required as a cofactor.

The catalysed reaction is 2-C-methyl-D-erythritol 4-phosphate + NADP(+) = 1-deoxy-D-xylulose 5-phosphate + NADPH + H(+). The protein operates within isoprenoid biosynthesis; isopentenyl diphosphate biosynthesis via DXP pathway; isopentenyl diphosphate from 1-deoxy-D-xylulose 5-phosphate: step 1/6. Catalyzes the NADPH-dependent rearrangement and reduction of 1-deoxy-D-xylulose-5-phosphate (DXP) to 2-C-methyl-D-erythritol 4-phosphate (MEP). This is 1-deoxy-D-xylulose 5-phosphate reductoisomerase from Chloroherpeton thalassium (strain ATCC 35110 / GB-78).